A 217-amino-acid polypeptide reads, in one-letter code: N-(5'-phosphoribosyl)anthranilate isomerase (217 aa).

Belongs to the TrpF family.

The catalysed reaction is N-(5-phospho-beta-D-ribosyl)anthranilate = 1-(2-carboxyphenylamino)-1-deoxy-D-ribulose 5-phosphate. Its pathway is amino-acid biosynthesis; L-tryptophan biosynthesis; L-tryptophan from chorismate: step 3/5. The sequence is that of N-(5'-phosphoribosyl)anthranilate isomerase from Chlorobium phaeovibrioides (strain DSM 265 / 1930) (Prosthecochloris vibrioformis (strain DSM 265)).